A 473-amino-acid chain; its full sequence is Siroheme synthase (473 aa).

The tract at residues 1–203 is precorrin-2 dehydrogenase /sirohydrochlorin ferrochelatase; the sequence is MTLFPIFADL…QQPGLAEQEL (203 aa). Residues 22–23 and 43–44 contribute to the NAD(+) site; these read AV and PR. A Phosphoserine modification is found at S128. The tract at residues 216-473 is uroporphyrinogen-III C-methyltransferase; the sequence is GSVVLVGAGP…GLPGPQALAA (258 aa). P225 contacts S-adenosyl-L-methionine. D248 acts as the Proton acceptor in catalysis. K270 functions as the Proton donor in the catalytic mechanism. S-adenosyl-L-methionine is bound by residues 302–304, I307, 332–333, M384, and G413; these read GGD and TA.

The protein in the N-terminal section; belongs to the precorrin-2 dehydrogenase / sirohydrochlorin ferrochelatase family. This sequence in the C-terminal section; belongs to the precorrin methyltransferase family.

The enzyme catalyses uroporphyrinogen III + 2 S-adenosyl-L-methionine = precorrin-2 + 2 S-adenosyl-L-homocysteine + H(+). The catalysed reaction is precorrin-2 + NAD(+) = sirohydrochlorin + NADH + 2 H(+). It carries out the reaction siroheme + 2 H(+) = sirohydrochlorin + Fe(2+). The protein operates within cofactor biosynthesis; adenosylcobalamin biosynthesis; precorrin-2 from uroporphyrinogen III: step 1/1. It participates in cofactor biosynthesis; adenosylcobalamin biosynthesis; sirohydrochlorin from precorrin-2: step 1/1. It functions in the pathway porphyrin-containing compound metabolism; siroheme biosynthesis; precorrin-2 from uroporphyrinogen III: step 1/1. Its pathway is porphyrin-containing compound metabolism; siroheme biosynthesis; siroheme from sirohydrochlorin: step 1/1. The protein operates within porphyrin-containing compound metabolism; siroheme biosynthesis; sirohydrochlorin from precorrin-2: step 1/1. In terms of biological role, multifunctional enzyme that catalyzes the SAM-dependent methylations of uroporphyrinogen III at position C-2 and C-7 to form precorrin-2 via precorrin-1. Then it catalyzes the NAD-dependent ring dehydrogenation of precorrin-2 to yield sirohydrochlorin. Finally, it catalyzes the ferrochelation of sirohydrochlorin to yield siroheme. The chain is Siroheme synthase from Bordetella parapertussis (strain 12822 / ATCC BAA-587 / NCTC 13253).